Reading from the N-terminus, the 177-residue chain is Transcriptional repressor NrdR (177 aa).

The segment at 3–34 (CPYCGGSETQVKDSRPSEDGAAIRRRRVCPDC) is a zinc-finger region. An ATP-cone domain is found at 49–139 (VVVLKRSGKR…VYKNFREARD (91 aa)). The disordered stretch occupies residues 148-177 (SDGMPVPAAAPEAEGDPEPEASGRRRAGRP).

Belongs to the NrdR family. The cofactor is Zn(2+).

Negatively regulates transcription of bacterial ribonucleotide reductase nrd genes and operons by binding to NrdR-boxes. This Methylobacterium radiotolerans (strain ATCC 27329 / DSM 1819 / JCM 2831 / NBRC 15690 / NCIMB 10815 / 0-1) protein is Transcriptional repressor NrdR.